Consider the following 447-residue polypeptide: UPF0210 protein LCK_00974 (447 aa).

The protein belongs to the UPF0210 family. In terms of assembly, homodimer.

The sequence is that of UPF0210 protein LCK_00974 from Leuconostoc citreum (strain KM20).